A 232-amino-acid polypeptide reads, in one-letter code: uncharacterized protein (232 aa).

The protein localises to the cytoplasm. It localises to the nucleus. This is an uncharacterized protein from Saccharomyces cerevisiae (strain ATCC 204508 / S288c) (Baker's yeast).